Consider the following 411-residue polypeptide: Peptide chain release factor subunit 1 (411 aa).

It belongs to the eukaryotic release factor 1 family. In terms of assembly, heterodimer of two subunits, one of which binds GTP.

It is found in the cytoplasm. In terms of biological role, directs the termination of nascent peptide synthesis (translation) in response to the termination codons UAA, UAG and UGA. The polypeptide is Peptide chain release factor subunit 1 (Methanosphaera stadtmanae (strain ATCC 43021 / DSM 3091 / JCM 11832 / MCB-3)).